Consider the following 119-residue polypeptide: Large ribosomal subunit protein bL19 (119 aa).

Belongs to the bacterial ribosomal protein bL19 family.

Functionally, this protein is located at the 30S-50S ribosomal subunit interface and may play a role in the structure and function of the aminoacyl-tRNA binding site. This Arthrobacter sp. (strain FB24) protein is Large ribosomal subunit protein bL19.